The primary structure comprises 441 residues: ATP-dependent RNA helicase SUB2 (441 aa).

The span at 1 to 17 (MSHEGEEELLDYSDSEE) shows a compositional bias: acidic residues. Positions 1–47 (MSHEGEEELLDYSDSEEIALPSTTVESGSNGDAKAETTTVKEENTEQ) are disordered. Positions 21–30 (PSTTVESGSN) are enriched in polar residues. A compositionally biased stretch (basic and acidic residues) spans 33–46 (AKAETTTVKEENTE). A Q motif motif is present at residues 57 to 85 (TGFRDFLLKPELLRAIVDCGFEHPSEVQQ). Positions 88–263 (IPQSILGTDV…KKFMSSPLEI (176 aa)) constitute a Helicase ATP-binding domain. Residue 101-108 (AKAGVGKT) participates in ATP binding. The DECD box motif lies at 210–213 (DECD). The Helicase C-terminal domain occupies 275 to 436 (GLQQYYVDVE…PYPAEGVDPS (162 aa)).

This sequence belongs to the DEAD box helicase family. DECD subfamily.

The protein localises to the nucleus. The catalysed reaction is ATP + H2O = ADP + phosphate + H(+). In terms of biological role, ATP-binding RNA helicase involved in transcription elongation and required for the export of mRNA out of the nucleus. SUB2 also plays a role in pre-mRNA splicing and spliceosome assembly. May be involved in rDNA and telomeric silencing, and maintenance of genome integrity. The protein is ATP-dependent RNA helicase SUB2 (SUB2) of Yarrowia lipolytica (strain CLIB 122 / E 150) (Yeast).